The following is a 585-amino-acid chain: Epithelial sodium channel subunit gamma (585 aa).

At 1–55 the chain is on the cytoplasmic side; the sequence is MAPGEKIKAKIKKNLPVTGPQAPTIKELMRWYCLNTNTHGCRRIVVSRGRLRRLL. A helical membrane pass occupies residues 56 to 76; it reads WIGFTLTAVALILWQCALLVF. At 77 to 477 the chain is on the extracellular side; sequence SFYTVSVSIK…GGQLGLWMSC (401 aa). 6 cysteine pairs are disulfide-bonded: Cys-100–Cys-219, Cys-308–Cys-393, Cys-330–Cys-389, Cys-334–Cys-385, Cys-343–Cys-370, and Cys-345–Cys-359. Residue Asn-207 is glycosylated (N-linked (GlcNAc...) asparagine). Asn-433 carries N-linked (GlcNAc...) asparagine glycosylation. A helical transmembrane segment spans residues 478 to 498; it reads SVVCVIEIIEVFFIDFFSIIA. Over 499-585 the chain is Cytoplasmic; it reads RRQWQKAKEW…LTDTQMLDEL (87 aa). The tract at residues 513–534 is disordered; sequence QAPPCPEAPRSPQGQDNPALDI. The PY motif; recruits WW domain-containing proteins and is thereby required for ubiquitination and inhibition of the channel by NEDD4 and NEDD4L signature appears at 559 to 563; that stretch reads PPPKY.

This sequence belongs to the amiloride-sensitive sodium channel (TC 1.A.6) family. SCNN1G subfamily. Component of the heterotrimeric epithelial sodium channel (ENaC) composed of an alpha/SCNN1A, a beta/SCNN1B and a gamma/SCNN1G subunit. An additional delta/SCNN1D subunit can replace the alpha/SCNN1A subunit to form an alternative channel with specific properties. Interacts with WWP1 (via WW domains). Interacts with WWP2 (via WW domains); inhibits the channel. Interacts with the full-length immature form of PCSK9 (pro-PCSK9); inhibits ENaC by promoting its proteasomal degradation. Interacts with BPIFA1; the interaction is indirect via SCNN1B and inhibits the proteolytic maturation of SCNN1A and SCNN1G and the activation of ENaC. Post-translationally, phosphorylated on serine and threonine residues. Aldosterone and insulin increase the basal level of phosphorylation. Ubiquitinated. Can be ubiquitinated at multiple sites and undergo monoubiquitination and polyubiquitination. Ubiquitination by NEDD4 or NEDD4L inhibits the ENaC channel through endocytosis, intracellular retention and degradation of its individual subunits. In terms of processing, ENaC is activated through the proteolytic maturation of its subunits. Furin cleaves the SCNN1G subunit first, followed by cleavage by prostasin (PRSS8), which results in a stepwise increase in the open probability of the channel due to the release of an inhibitory tract. BPIFA1, which is recruited by the SCNN1B subunit, prevents the proteolytic activation of ENaC. Post-translationally, N-glycosylated. N-linked glycans are processed to complex type during ENaC complex assembly and transport to the plasma membrane.

The protein localises to the apical cell membrane. The catalysed reaction is Na(+)(in) = Na(+)(out). With respect to regulation, originally identified and characterized by its inhibition by the diuretic drug amiloride. Functionally, this is one of the three pore-forming subunits of the heterotrimeric epithelial sodium channel (ENaC), a critical regulator of sodium balance and fluid homeostasis. ENaC operates in epithelial tissues, where it mediates the electrodiffusion of sodium ions from extracellular fluid through the apical membrane of cells, with water following osmotically. It plays a key role in maintaining sodium homeostasis through electrogenic sodium reabsorption in the kidneys. Additionally, ENaC is essential for airway surface liquid homeostasis, which is crucial for proper mucus clearance. The polypeptide is Epithelial sodium channel subunit gamma (Pan troglodytes (Chimpanzee)).